We begin with the raw amino-acid sequence, 495 residues long: Mothers against decapentaplegic homolog 6 (495 aa).

A compositionally biased stretch (basic residues) spans 1–15 (MFRSKRSGLVRRLWR). Disordered stretches follow at residues 1–115 (MFRS…PGWL) and 133–161 (AAGAPRDSGDPQARQSPEPEEGGGPRSRE). 2 positions are modified to dimethylated arginine; alternate: R74 and R81. R74 and R81 each carry omega-N-methylarginine; alternate. The MH1 domain occupies 149-276 (PEPEEGGGPR…FSRLCGPESP (128 aa)). K174 participates in a covalent cross-link: Glycyl lysine isopeptide (Lys-Gly) (interchain with G-Cter in ubiquitin). Zn(2+) is bound by residues C206, C248, C261, and H266. Positions 332–495 (WCSVAYWEHR…WLEILLNNHR (164 aa)) constitute an MH2 domain. At S436 the chain carries Phosphoserine; by PRKX; in vitro.

It belongs to the dwarfin/SMAD family. In terms of assembly, interacts with NEDD4L. Interacts with WWP1. Interacts with STAMBP and PRKX. Interacts with RNF111 and AXIN1. Interacts with TGF-beta type I receptor superfamily members, including ACVR1B, BMPR1B and TGFBR1. In response to BMP2 treatment, interacts with SMAD1; this interaction may inhibit SMAD1-binding to SMAD4. Interacts with HOXC8 and HOXC9. Interacts with PELI1; this interaction interferes with PELI1 complex formation with TRAF6, IRAK1, IRAK4 and MYD88 in response to IL1B and hence negatively regulates IL1R-TLR signaling. Interacts with TSC22D1/TSC-22. Monoubiquitinated at Lys-174 by the E2/E3 hybrid ubiquitin-protein ligase UBE2O, leading to reduced binding affinity for the activated BMP type I receptor ACVR1/ALK2, thereby enhancing BMP7 and regulating adipocyte differentiation. Ubiquitinated by WWP1. Ubiquitinated by ARK2C, promoting proteasomal degradation, leading to enhance the BMP-Smad signaling. In terms of processing, arginine methylation by PRMT1, which is recruited by BMPR2, initiates BMP-Induced signaling and induces dissociation from the BMPR1B receptor at the cell surface leading to derepress downstream Smad1/Smad5 signaling. Post-translationally, phosphorylated by BMP type 1 receptor kinase and by PRKX. Ubiquitous in various organs, with higher levels in lung.

It is found in the nucleus. In terms of biological role, transforming growth factor-beta superfamily receptors signaling occurs through the Smad family of intracellular mediators. SMAD6 is an inhibitory Smad (i-Smad) that negatively regulates signaling downstream of type I transforming growth factor-beta. Acts as a mediator of TGF-beta and BMP anti-inflammatory activities. Suppresses IL1R-TLR signaling through its direct interaction with PEL1, preventing NF-kappa-B activation, nuclear transport and NF-kappa-B-mediated expression of pro-inflammatory genes. Blocks the BMP-SMAD1 signaling pathway by competing with SMAD4 for receptor-activated SMAD1-binding. Binds to regulatory elements in target promoter regions. This Mus musculus (Mouse) protein is Mothers against decapentaplegic homolog 6 (Smad6).